The following is a 94-amino-acid chain: Protein translocase subunit SecE (94 aa).

The segment at 1 to 32 (MTDAVGSIDTPDAQDEVPESKKTRKGGKRAKK) is disordered. Positions 22 to 32 (KTRKGGKRAKK) are enriched in basic residues. The chain crosses the membrane as a helical span at residues 59-81 (QLTSYTTVVIFFVAIMIRLVTVI).

Belongs to the SecE/SEC61-gamma family. As to quaternary structure, component of the Sec protein translocase complex. Heterotrimer consisting of SecY, SecE and SecG subunits. The heterotrimers can form oligomers, although 1 heterotrimer is thought to be able to translocate proteins. Interacts with the ribosome. Interacts with SecDF, and other proteins may be involved. Interacts with SecA.

The protein resides in the cell membrane. Essential subunit of the Sec protein translocation channel SecYEG. Clamps together the 2 halves of SecY. May contact the channel plug during translocation. The polypeptide is Protein translocase subunit SecE (Streptomyces galbus).